The following is a 329-amino-acid chain: DNA-directed RNA polymerase subunit alpha (329 aa).

The tract at residues 1–234 (MQGSVTEFLK…EQLDAFVELR (234 aa)) is alpha N-terminal domain (alpha-NTD). The alpha C-terminal domain (alpha-CTD) stretch occupies residues 248–329 (FDPILLRPVD…WPPASLADDL (82 aa)).

It belongs to the RNA polymerase alpha chain family. As to quaternary structure, homodimer. The RNAP catalytic core consists of 2 alpha, 1 beta, 1 beta' and 1 omega subunit. When a sigma factor is associated with the core the holoenzyme is formed, which can initiate transcription.

The catalysed reaction is RNA(n) + a ribonucleoside 5'-triphosphate = RNA(n+1) + diphosphate. Functionally, DNA-dependent RNA polymerase catalyzes the transcription of DNA into RNA using the four ribonucleoside triphosphates as substrates. The protein is DNA-directed RNA polymerase subunit alpha of Shewanella amazonensis (strain ATCC BAA-1098 / SB2B).